The following is a 547-amino-acid chain: Chaperonin GroEL (547 aa).

ATP-binding positions include 30–33 (TLGP), Lys51, 87–91 (DGTTT), Gly415, and Asp496. Residues 527–547 (SDKAEPMPMRGGMGGMGGMDF) form a disordered region. Positions 537-547 (GGMGGMGGMDF) are enriched in gly residues.

Belongs to the chaperonin (HSP60) family. Forms a cylinder of 14 subunits composed of two heptameric rings stacked back-to-back. Interacts with the co-chaperonin GroES.

It localises to the cytoplasm. The catalysed reaction is ATP + H2O + a folded polypeptide = ADP + phosphate + an unfolded polypeptide.. Its function is as follows. Together with its co-chaperonin GroES, plays an essential role in assisting protein folding. The GroEL-GroES system forms a nano-cage that allows encapsulation of the non-native substrate proteins and provides a physical environment optimized to promote and accelerate protein folding. This chain is Chaperonin GroEL, found in Rickettsia rickettsii (strain Sheila Smith).